A 1355-amino-acid chain; its full sequence is Transcription factor MAR1 (1355 aa).

Positions 23 to 52 form a DNA-binding region, zn(2)-C6 fungal-type; sequence CTICRKRKVKCDKTRPHCNQCTKTGVAHLC. Disordered regions lie at residues 586–614, 918–942, and 1221–1253; these read TTDN…KDTN, SVPS…LNQD, and PPIS…TSSL. The segment covering 589–603 has biased composition (low complexity); sequence NTRSGPPSNSNRNGS. Polar residues predominate over residues 604 to 614; it reads ETPSVSPKDTN. Positions 918–927 are enriched in low complexity; that stretch reads SVPSSCNSSS. Over residues 1225–1238 the composition is skewed to polar residues; sequence SAKNNMAWGTTPES.

The protein localises to the nucleus. Its function is as follows. Transcription factor that contributes to plasma membrane sphingolipid incorporation and membrane permeability, decreasing fluconazole accumulation. Regulates 337 genes under fluconazole stress, including several related to lipid biosynthesis pathways such as RSB1, encoding a sphingoid long-chain base efflux transporter. Associates with the promoter of RSB1 in the region containing two 5'-CCCCTCC-3' motifs and increases its promoter occupancy upon fluconazole stress. The polypeptide is Transcription factor MAR1 (Candida glabrata (strain ATCC 2001 / BCRC 20586 / JCM 3761 / NBRC 0622 / NRRL Y-65 / CBS 138) (Yeast)).